We begin with the raw amino-acid sequence, 130 residues long: Small ribosomal subunit protein uS9 (130 aa).

The tract at residues 105 to 130 (TRDSRMVERKKPGLKKARRASQFSKR) is disordered. Basic and acidic residues predominate over residues 106-115 (RDSRMVERKK). The segment covering 116–130 (PGLKKARRASQFSKR) has biased composition (basic residues).

The protein belongs to the universal ribosomal protein uS9 family.

This chain is Small ribosomal subunit protein uS9, found in Oenococcus oeni (strain ATCC BAA-331 / PSU-1).